Consider the following 471-residue polypeptide: Cytolysin (471 aa).

The signal sequence occupies residues 1–20 (MKKMTLFTLSLLATAVQVGA). The Ricin B-type lectin domain occupies 338 to 465 (AHVTLQSLSN…EANQARWKPT (128 aa)).

Belongs to the HlyA hemolysin family.

In terms of biological role, bacterial hemolysins are exotoxins that attack blood cell membranes and cause cell rupture by mechanisms not clearly defined. The protein is Cytolysin (vvhA) of Vibrio vulnificus (strain CMCP6).